The primary structure comprises 304 residues: MKKTSDYAVAVIGLGSMGFGAAASCINAGLTTYGVDINPQALEKLRQAGAAQADTRIDAFADKLDAVVLLVVNATQVNGILFGEPQVAAKLKPGTVVMVSSTISAQDAKNIEQRLAEHQLVMLDAPVSGGAAKAAAGDMTVMASGSDLAFEKLKPVLDAVAGKVYRIGEEIGLGATVKIIHQLLAGVHIAAGAEAMALAARADIPLDIMYDVVTNAAGNSWMFENRMRHVVDGDYTPKSAVDIFVKDLGLVTDTAKSLHFPLPLASTAFNMFTAASNAGFGKEDDSAVIKIFNGITLPEKKEAP.

NAD(+) is bound by residues 7 to 35 (YAVA…TYGV) and Thr-102. Lys-178 is a catalytic residue. Lys-246 contributes to the NAD(+) binding site.

It belongs to the HIBADH-related family. L-threonate dehydrogenase subfamily.

It carries out the reaction L-threonate + NAD(+) = 2-dehydro-L-erythronate + NADH + H(+). In terms of biological role, catalyzes oxidation of L-threonate to 2-oxo-tetronate. Can use either NAD(+) or NADP(+) as cosubstrate, with a preference for NAD(+). This Pectobacterium atrosepticum (strain SCRI 1043 / ATCC BAA-672) (Erwinia carotovora subsp. atroseptica) protein is L-threonate dehydrogenase.